Reading from the N-terminus, the 240-residue chain is Large ribosomal subunit protein uL2 (240 aa).

The interval 199 to 240 is disordered; the sequence is DHPFGGGGRQHPGRPKSVSRDAAPGRKVGDIASKRTGRGGNE. The segment covering 221–231 has biased composition (basic and acidic residues); that stretch reads APGRKVGDIAS.

Belongs to the universal ribosomal protein uL2 family. As to quaternary structure, part of the 50S ribosomal subunit. Forms a bridge to the 30S subunit in the 70S ribosome.

In terms of biological role, one of the primary rRNA binding proteins. Required for association of the 30S and 50S subunits to form the 70S ribosome, for tRNA binding and peptide bond formation. It has been suggested to have peptidyltransferase activity; this is somewhat controversial. Makes several contacts with the 16S rRNA in the 70S ribosome. This chain is Large ribosomal subunit protein uL2, found in Halobacterium salinarum (strain ATCC 29341 / DSM 671 / R1).